The sequence spans 497 residues: Glycerol kinase (497 aa).

T13 serves as a coordination point for ADP. ATP-binding residues include T13, T14, and S15. T13 lines the sn-glycerol 3-phosphate pocket. Residue R17 participates in ADP binding. Sn-glycerol 3-phosphate-binding residues include R83, E84, and Y135. Glycerol is bound by residues R83, E84, and Y135. Position 231 is a phosphohistidine; by HPr (H231). Sn-glycerol 3-phosphate is bound at residue D245. Residues D245 and Q246 each coordinate glycerol. ADP contacts are provided by T267 and G310. T267, G310, Q314, and G411 together coordinate ATP. Residues G411 and N415 each coordinate ADP.

It belongs to the FGGY kinase family. Homotetramer and homodimer (in equilibrium). In terms of processing, the phosphoenolpyruvate-dependent sugar phosphotransferase system (PTS), including enzyme I, and histidine-containing protein (HPr) are required for the phosphorylation, which leads to the activation of the enzyme.

The enzyme catalyses glycerol + ATP = sn-glycerol 3-phosphate + ADP + H(+). It functions in the pathway polyol metabolism; glycerol degradation via glycerol kinase pathway; sn-glycerol 3-phosphate from glycerol: step 1/1. With respect to regulation, activated by phosphorylation and inhibited by fructose 1,6-bisphosphate (FBP). In terms of biological role, key enzyme in the regulation of glycerol uptake and metabolism. Catalyzes the phosphorylation of glycerol to yield sn-glycerol 3-phosphate. The polypeptide is Glycerol kinase (Listeria monocytogenes serotype 4a (strain HCC23)).